A 784-amino-acid chain; its full sequence is DNA repair and recombination protein RAD54-like (784 aa).

Residues 2-9 (RRSLAPSQ) are required for chromatin remodeling, strand pairing activities and coupling of ATPase activity. Thr-22 carries the phosphothreonine modification. The Helicase ATP-binding domain maps to 169-344 (EGKKGNFNGC…FSLVNFVNPE (176 aa)). 182-189 (DEMGLGKT) provides a ligand contact to ATP. Residues 295 to 298 (DEGH) carry the DEGH box motif. The region spanning 501-658 (LLDFMLATIR…NNESAEKHFT (158 aa)) is the Helicase C-terminal domain. Positions 742–784 (QAIKESEETKQEAEDTSIPAKSKRKRSTTPESDDCNDEDFKGF) are disordered. Basic and acidic residues predominate over residues 745–754 (KESEETKQEA).

It belongs to the SNF2/RAD54 helicase family. In terms of assembly, interacts (via N-terminus) with spn-A/Rad51.

It is found in the nucleus. In terms of biological role, involved in mitotic DNA repair and meiotic recombination. Functions in the recombinational DNA repair pathway. Essential for interhomolog gene conversion (GC), but may have a less important role in intersister GC than spn-A/Rad51. In the presence of DNA, spn-A/Rad51 enhances the ATPase activity of okr/Rad54. In Drosophila willistoni (Fruit fly), this protein is DNA repair and recombination protein RAD54-like.